Reading from the N-terminus, the 207-residue chain is Uracil phosphoribosyltransferase (207 aa).

Residues R77, R102, and 129–137 (DPMLATGGS) each bind 5-phospho-alpha-D-ribose 1-diphosphate. Uracil contacts are provided by residues I192 and 197-199 (GDA). D198 serves as a coordination point for 5-phospho-alpha-D-ribose 1-diphosphate.

This sequence belongs to the UPRTase family. The cofactor is Mg(2+).

The catalysed reaction is UMP + diphosphate = 5-phospho-alpha-D-ribose 1-diphosphate + uracil. The protein operates within pyrimidine metabolism; UMP biosynthesis via salvage pathway; UMP from uracil: step 1/1. Its activity is regulated as follows. Allosterically activated by GTP. Functionally, catalyzes the conversion of uracil and 5-phospho-alpha-D-ribose 1-diphosphate (PRPP) to UMP and diphosphate. The sequence is that of Uracil phosphoribosyltransferase from Mycoplasma mobile (strain ATCC 43663 / 163K / NCTC 11711) (Mesomycoplasma mobile).